A 765-amino-acid polypeptide reads, in one-letter code: MPPTNGEGGSQQPQQQQQQQQQQQQQQQQQQQQQQGGSGSSDFVRKLYKMLEDPSYHSVVRWSDDGDSFVVLENEKFTKTILPKHFKHSNFASFVRQLNKYDFHKVRHNDENGESPYGRDAWEFKHPEFRADRKDNLDNIRRKAPAPRKQQQSEEAFNASQQQIAALSESLQATQQQLQALQQQCYELEKTNRLLVSEVMTLQKMVKAQNQASNEIINHLGSMEDRRRNNRGATQAAPNFHAGAMSFLTDGAEEPAPELRRARELLSVVGPDLQANRELERLYMTYNQNGAPAEPAATNSSAVMFTQAAAPGTQATAPGMPLVHNPLNDPQNMMYPVAQTPSIDPSFHTDQMHNMPYSRPLSNPAVVAETSSSQITPSQITPPPKDQMSSMWRDKKPRVLLVEDDKTCARIGAKFLSTLDCGVDTAGDGLEAVERINQDSTRFDLIFMDIIMPNMDGVSATAMIRMVSPHVPIIAMTSNIRGEDINTYFQYGMNDVLAKPFTRDNMSRLLRRHLAHLLKDPQSAASTGIVLTTDDLTLAGQTAGPATTGVGVGVAGAPSGGAHGPGPPAQHQQGYAMAPPTTMQPAPPQVKFEQSPTAAPAPGLDPSSAAAAPTWQSTNPAGVQLQPPPPPTPTQPSPTSAAPPAGLDPASAVAAAAAAAAAAAAAAASMTPGGYLAAAPPPPPPPGAMVLTPAGTPTGVGHPAPSGAGSAAGARGPPGPGPVGPGSVVDDSRPEKRQRLMQGGYASVSGHGHGHPGVGVAGFVQ.

Positions 1–42 (MPPTNGEGGSQQPQQQQQQQQQQQQQQQQQQQQQQGGSGSSD) are disordered. The span at 11–35 (QQPQQQQQQQQQQQQQQQQQQQQQQ) shows a compositional bias: low complexity. Residues 40 to 145 (SSDFVRKLYK…NLDNIRRKAP (106 aa)) are DNA-binding domain. A coiled-coil region spans residues 157–198 (FNASQQQIAALSESLQATQQQLQALQQQCYELEKTNRLLVSE). Positions 160-220 (SQQQIAALSE…QASNEIINHL (61 aa)) are hydrophobic repeat HR-A/B. A disordered region spans residues 371–391 (SSSQITPSQITPPPKDQMSSM). Positions 398 to 514 (RVLLVEDDKT…NMSRLLRRHL (117 aa)) constitute a Response regulatory domain. Aspartate 449 carries the 4-aspartylphosphate modification. A transactivation domain region spans residues 542-765 (TAGPATTGVG…PGVGVAGFVQ (224 aa)). The span at 550–564 (VGVGVAGAPSGGAHG) shows a compositional bias: gly residues. Disordered stretches follow at residues 550–647 (VGVG…PAGL) and 686–765 (PGAM…GFVQ). Residues 569–584 (AQHQQGYAMAPPTTMQ) show a composition bias toward low complexity. The span at 626–636 (QPPPPPTPTQP) shows a compositional bias: pro residues. 2 stretches are compositionally biased toward low complexity: residues 637–647 (SPTSAAPPAGL) and 699–715 (GVGHPAPSGAGSAAGAR). Residues 755–765 (HPGVGVAGFVQ) show a composition bias toward gly residues.

This sequence belongs to the SKN7 family. Homotrimer.

It is found in the nucleus. In terms of biological role, transcription factor that is part of a SLN1-YPD1-SKN7 two-component regulatory system, which controls gene expression in response to changes in the osmolarity of the extracellular environment. Under low osmotic conditions, phosphorylated and activated by the phosphorelay intermediate protein YPD1. Also activated in response to oxidative stress, independent on the two-component regulatory system. Regulates heat shock genes in response to oxidative stress and genes involved in cell wall integrity in response to osmotic changes. This chain is Transcription factor SKN7, found in Chaetomium thermophilum (strain DSM 1495 / CBS 144.50 / IMI 039719) (Thermochaetoides thermophila).